The sequence spans 772 residues: Endoplasmic reticulum membrane sensor NFE2L1 (772 aa).

The helical; Signal-anchor for type II membrane protein transmembrane segment at 7–24 (YLTEGLLQFTILLSLIGV) threads the bilayer. The disordered stretch occupies residues 108–148 (DPEGSVSGSQPNSGLALESSSGLQDVTGPDNGVRESETEQG). Residues 113 to 131 (VSGSQPNSGLALESSSGLQ) are compositionally biased toward polar residues. Positions 191-199 (VFDYSHRQK) are cholesterol recognition/amino acid consensus (CRAC) region. Asparagine 348 carries N-linked (GlcNAc...) asparagine glycosylation. The CPD stretch occupies residues 379 to 383 (SPEVE). N-linked (GlcNAc...) asparagine glycans are attached at residues asparagine 412 and asparagine 423. The interval 470-532 (EEEFDSDSGL…AVGYSSDSET (63 aa)) is disordered. Positions 476–480 (DSGLS) match the Destruction motif motif. A compositionally biased stretch (low complexity) spans 476–523 (DSGLSLDSSHSPSSLSSSEGSSSSSSSSSSSSSSASSSASSSFSEEGA). At serine 528 the chain carries Phosphoserine; by CK2. Position 599 is a phosphoserine; by PKA (serine 599). The 64-residue stretch at 654–717 (LIRDIRRRGK…RQMKQKVQSL (64 aa)) folds into the bZIP domain. Residues 656–675 (RDIRRRGKNKMAAQNCRKRK) are basic motif. The interval 682–696 (LERDVEDLQRDKARL) is leucine-zipper. The interval 753–772 (RTMADQQARRQERKPKDRRK) is disordered. Positions 761–768 (RRQERKPK) match the Nuclear localization signal motif. Residues 763–772 (QERKPKDRRK) show a composition bias toward basic residues.

It belongs to the bZIP family. CNC subfamily. As to quaternary structure, interacts with KEAP1. In terms of assembly, interacts (via CPD region) with FBXW7; leading to its ubiquitination and degradation. Interacts with SYVN1/HRD1; leading to its ubiquitination and degradation. Interacts (when ubiquitinated) with DDI2; leading to its cleavage. Interacts (via the bZIP domain) with small MAF protein (MAFF, MAFG or MAFK); required for binding to antioxidant response elements (AREs) on DNA. Interacts (via Destruction motif) with BTRC; leading to its ubiquitination and degradation. Interacts with CEBPB; the heterodimer represses expression of DSPP during odontoblast differentiation. Interacts with MOTS-c, a peptide produced by the mitochondrially encoded 12S rRNA MT-RNR1. Post-translationally, cleaved at Leu-104 by the aspartyl protease DDI2 following retrotranslocation, releasing the protein from the endoplasmic reticulum membrane and forming the transcription factor NRF1 that translocates into the nucleus. Ubiquitination is prerequisite for cleavage by aspartyl protease DDI2. N-glycosylated in normal conditions, when it has a single-pass type II membrane protein topology, with the DNA-binding domain facing the endoplasmic reticulum lumen. Deglycosylated during retrotranslocation to the cytosolic side of the membrane, to have a single-pass type III membrane protein topology with the major part of the protein facing the cytosol. In terms of processing, ubiquitinated by the SCF(FBXW7) complex and SYVN1/HRD1, leading to its degradation by the proteasome. Ubiquitinated during retrotranslocation to the cytosolic side of the membrane: ubiquitination does not lead to degradation and is required for processing by the aspartyl protease DDI2 and subsequent release from the endoplasmic reticulum membrane. Post-translationally, phosphorylation by CK2 at Ser-528 inhibits transcription factor activity, possibly by affecting DNA-binding activity. Phosphorylation at Ser-599 is required for interaction with CEBPB. Ubiquitinated by the SCF(BTRC) complex in the nucleus, leading to its degradation by the proteasome.

Its subcellular location is the endoplasmic reticulum membrane. The protein resides in the nucleus. Endoplasmic reticulum membrane sensor that translocates into the nucleus in response to various stresses to act as a transcription factor. Constitutes a precursor of the transcription factor NRF1. Able to detect various cellular stresses, such as cholesterol excess, oxidative stress or proteasome inhibition. In response to stress, it is released from the endoplasmic reticulum membrane following cleavage by the protease DDI2 and translocates into the nucleus to form the transcription factor NRF1. Acts as a key sensor of cholesterol excess: in excess cholesterol conditions, the endoplasmic reticulum membrane form of the protein directly binds cholesterol via its CRAC motif, preventing cleavage and release of the transcription factor NRF1, thereby allowing expression of genes promoting cholesterol removal, such as CD36. Involved in proteasome homeostasis: in response to proteasome inhibition, it is released from the endoplasmic reticulum membrane, translocates to the nucleus and activates expression of genes encoding proteasome subunits. In terms of biological role, CNC-type bZIP family transcription factor that translocates to the nucleus and regulates expression of target genes in response to various stresses. Heterodimerizes with small-Maf proteins (MAFF, MAFG or MAFK) and binds DNA motifs including the antioxidant response elements (AREs), which regulate expression of genes involved in oxidative stress response. Activates or represses expression of target genes, depending on the context. Plays a key role in cholesterol homeostasis by acting as a sensor of cholesterol excess: in low cholesterol conditions, translocates into the nucleus and represses expression of genes involved in defense against cholesterol excess, such as CD36. In excess cholesterol conditions, the endoplasmic reticulum membrane form of the protein directly binds cholesterol via its CRAC motif, preventing cleavage and release of the transcription factor NRF1, thereby allowing expression of genes promoting cholesterol removal. Critical for redox balance in response to oxidative stress: acts by binding the AREs motifs on promoters and mediating activation of oxidative stress response genes, such as GCLC, GCLM, GSS, MT1 and MT2. Plays an essential role during fetal liver hematopoiesis: probably has a protective function against oxidative stress and is involved in lipid homeostasis in the liver. Involved in proteasome homeostasis: in response to proteasome inhibition, mediates the 'bounce-back' of proteasome subunits by translocating into the nucleus and activating expression of genes encoding proteasome subunits. Also involved in regulating glucose flux. Together with CEBPB; represses expression of DSPP during odontoblast differentiation. In response to ascorbic acid induction, activates expression of SP7/Osterix in osteoblasts. In Pongo abelii (Sumatran orangutan), this protein is Endoplasmic reticulum membrane sensor NFE2L1.